Reading from the N-terminus, the 269-residue chain is Phosphate import ATP-binding protein PstB (269 aa).

An ABC transporter domain is found at 14–253 (LTLEDVSISY…EFDSTKKIFS (240 aa)). An ATP-binding site is contributed by 46-53 (GPSGCGKS).

This sequence belongs to the ABC transporter superfamily. Phosphate importer (TC 3.A.1.7) family. In terms of assembly, the complex is composed of two ATP-binding proteins (PstB), two transmembrane proteins (PstC and PstA) and a solute-binding protein (PstS).

The protein resides in the cell inner membrane. It carries out the reaction phosphate(out) + ATP + H2O = ADP + 2 phosphate(in) + H(+). Functionally, part of the ABC transporter complex PstSACB involved in phosphate import. Responsible for energy coupling to the transport system. The protein is Phosphate import ATP-binding protein PstB of Prochlorococcus marinus subsp. pastoris (strain CCMP1986 / NIES-2087 / MED4).